The following is a 271-amino-acid chain: ELH (271 aa).

A signal peptide spans 1–28 (MKRPNNRPTNTMSLILCLTLSSLCVSSQ). 2 consecutive propeptides follow at residues 29–95 (SASV…NEKR) and 162–184 (AAGG…RRKR). The segment at 162–190 (AAGGMEQSEGQNPETESHSRRKRSVLTPS) is disordered. Lys241 carries the lysine amide modification.

It belongs to the molluscan ELH family. As to expression, bag cell neurons.

The protein resides in the secreted. Its function is as follows. ELH acts as a neurotransmitter locally, upon neurons of the abdominal ganglion and as a hormone by diffusing into the circulating hemolymph and modulating the activity of other organs. It specifically causes contraction of smooth muscle in the ovotestis and expulsion of the egg string. In terms of biological role, alpha-BCP decreases the activity of a cluster of neurons in the left upper quadrant of the abdominal ganglion. Functionally, beta-BCP specifically excites 2 neurons, L1 and R1, in the abdominal ganglion. This chain is ELH, found in Aplysia californica (California sea hare).